Here is a 905-residue protein sequence, read N- to C-terminus: Catenin alpha-2 (905 aa).

Thr632 carries the post-translational modification Phosphothreonine. Residues Ser640, Ser651, and Ser853 each carry the phosphoserine modification. The span at 869-879 (VKREKPEEFQT) shows a compositional bias: basic and acidic residues. A disordered region spans residues 869-891 (VKREKPEEFQTRVRRGSQKKHIS). The segment covering 880-890 (RVRRGSQKKHI) has biased composition (basic residues). A Phosphoserine modification is found at Ser891.

Belongs to the vinculin/alpha-catenin family. Interacts with CDH1 and CDH2. Interacts with ZNF639; recruits CTNNA2 to the nucleus. Interacts with F-actin.

It localises to the cell membrane. The protein localises to the cytoplasm. It is found in the cytoskeleton. Its subcellular location is the cell junction. The protein resides in the adherens junction. It localises to the cell projection. The protein localises to the axon. It is found in the nucleus. In terms of biological role, may function as a linker between cadherin adhesion receptors and the cytoskeleton to regulate cell-cell adhesion and differentiation in the nervous system. Required for proper regulation of cortical neuronal migration and neurite growth. It acts as a negative regulator of Arp2/3 complex activity and Arp2/3-mediated actin polymerization. It thereby suppresses excessive actin branching which would impair neurite growth and stability. Regulates morphological plasticity of synapses and cerebellar and hippocampal lamination during development. Functions in the control of startle modulation. This chain is Catenin alpha-2 (CTNNA2), found in Pongo abelii (Sumatran orangutan).